Here is a 1139-residue protein sequence, read N- to C-terminus: DNA-directed RNA polymerase subunit beta (1139 aa).

The segment at 1085 to 1139 (ADTSNRHTPSRPTYESVTSEDLSPSPAFTRVLRTADANASRSLEEDEDEEEEEDF) is disordered. A compositionally biased stretch (polar residues) spans 1086–1106 (DTSNRHTPSRPTYESVTSEDL). A compositionally biased stretch (acidic residues) spans 1128–1139 (EEDEDEEEEEDF).

This sequence belongs to the RNA polymerase beta chain family. As to quaternary structure, in cyanobacteria the RNAP catalytic core is composed of 2 alpha, 1 beta, 1 beta', 1 gamma and 1 omega subunit. When a sigma factor is associated with the core the holoenzyme is formed, which can initiate transcription.

It carries out the reaction RNA(n) + a ribonucleoside 5'-triphosphate = RNA(n+1) + diphosphate. DNA-dependent RNA polymerase catalyzes the transcription of DNA into RNA using the four ribonucleoside triphosphates as substrates. The polypeptide is DNA-directed RNA polymerase subunit beta (Synechococcus sp. (strain JA-2-3B'a(2-13)) (Cyanobacteria bacterium Yellowstone B-Prime)).